A 433-amino-acid chain; its full sequence is GTPase Obg (433 aa).

One can recognise an Obg domain in the interval 1–159 (MAITDYCECR…LNVSLEVKYL (159 aa)). Positions 160 to 329 (ANVGIVGFPN…LLDRVFELYN (170 aa)) constitute an OBG-type G domain. Residues 166-173 (GFPNSGKS), 191-195 (FTTLI), 212-215 (DIPG), 282-285 (NKID), and 310-312 (ISA) each bind GTP. Residues serine 173 and threonine 193 each coordinate Mg(2+). The region spanning 355-433 (TNENNNDPLN…FDGCEFVIND (79 aa)) is the OCT domain.

This sequence belongs to the TRAFAC class OBG-HflX-like GTPase superfamily. OBG GTPase family. In terms of assembly, monomer. It depends on Mg(2+) as a cofactor.

It localises to the cytoplasm. In terms of biological role, an essential GTPase which binds GTP, GDP and possibly (p)ppGpp with moderate affinity, with high nucleotide exchange rates and a fairly low GTP hydrolysis rate. Plays a role in control of the cell cycle, stress response, ribosome biogenesis and in those bacteria that undergo differentiation, in morphogenesis control. The sequence is that of GTPase Obg from Mycoplasma genitalium (strain ATCC 33530 / DSM 19775 / NCTC 10195 / G37) (Mycoplasmoides genitalium).